A 488-amino-acid polypeptide reads, in one-letter code: Photosystem II CP43 reaction center protein (488 aa).

Positions 1–29 (MTKVFALGWLLKINLMKTLYSLRRFYHVE) are excised as a propeptide. Transmembrane regions (helical) follow at residues 84–108 (LFEV…PHLA), 149–170 (LIGP…RDKN), 193–215 (KALF…RFVS), 270–290 (KPFA…LSYS), and 306–327 (WYNN…ASQA). Glu-382 is a binding site for [CaMn4O5] cluster. The helical transmembrane segment at 462–486 (RARAAAAGFEKGINRENEPVLSMRP) threads the bilayer.

Belongs to the PsbB/PsbC family. PsbC subfamily. PSII is composed of 1 copy each of membrane proteins PsbA, PsbB, PsbC, PsbD, PsbE, PsbF, PsbH, PsbI, PsbJ, PsbK, PsbL, PsbM, PsbT, PsbX, PsbY, PsbZ, Psb30/Ycf12, at least 3 peripheral proteins of the oxygen-evolving complex and a large number of cofactors. It forms dimeric complexes. The cofactor is Binds multiple chlorophylls and provides some of the ligands for the Ca-4Mn-5O cluster of the oxygen-evolving complex. It may also provide a ligand for a Cl- that is required for oxygen evolution. PSII binds additional chlorophylls, carotenoids and specific lipids..

It is found in the plastid. Its subcellular location is the chloroplast thylakoid membrane. Its function is as follows. One of the components of the core complex of photosystem II (PSII). It binds chlorophyll and helps catalyze the primary light-induced photochemical processes of PSII. PSII is a light-driven water:plastoquinone oxidoreductase, using light energy to abstract electrons from H(2)O, generating O(2) and a proton gradient subsequently used for ATP formation. The sequence is that of Photosystem II CP43 reaction center protein from Pyropia yezoensis (Susabi-nori).